Consider the following 507-residue polypeptide: Arabinose import ATP-binding protein AraG (507 aa).

ABC transporter domains lie at 8-243 and 255-499; these read LSFH…MVGR and PHGE…MLRI. 40–47 lines the ATP pocket; it reads GENGAGKS.

Belongs to the ABC transporter superfamily. Arabinose importer (TC 3.A.1.2.2) family. In terms of assembly, the complex is composed of two ATP-binding proteins (AraG), two transmembrane proteins (AraH) and a solute-binding protein (AraF).

Its subcellular location is the cell inner membrane. The catalysed reaction is L-arabinose(out) + ATP + H2O = L-arabinose(in) + ADP + phosphate + H(+). In terms of biological role, part of the ABC transporter complex AraFGH involved in arabinose import. Responsible for energy coupling to the transport system. The chain is Arabinose import ATP-binding protein AraG from Pectobacterium atrosepticum (strain SCRI 1043 / ATCC BAA-672) (Erwinia carotovora subsp. atroseptica).